A 111-amino-acid polypeptide reads, in one-letter code: uncharacterized protein (111 aa).

This is an uncharacterized protein from Aquifex aeolicus (strain VF5).